Here is a 2193-residue protein sequence, read N- to C-terminus: Non-reducing polyketide synthase esdpA (2193 aa).

The region spanning 90–252 (NVLLAPLTVL…AKVQVNGRYH (163 aa)) is the Starter acyltransferase (SAT) domain. In terms of domain architecture, Ketosynthase family 3 (KS3) spans 381 to 797 (DECVAIVGAA…GNNTVIIVCE (417 aa)). Catalysis depends on for beta-ketoacyl synthase activity residues cysteine 546, histidine 682, and histidine 720. The region spanning 906 to 1158 (VFSGQSGMTV…YFVDAVRRIK (253 aa)) is the Malonyl-CoA:ACP transacylase (MAT) domain. Serine 992 (for acyl/malonyl transferase activity) is an active-site residue. Residues 1265-1392 (PPMLSLENFS…GRVVLEDRRR (128 aa)) form an N-terminal hotdog fold region. The 305-residue stretch at 1265–1569 (PPMLSLENFS…FVKISSHILQ (305 aa)) folds into the PKS/mFAS DH domain. The interval 1419–1569 (VFSASGSIAY…FVKISSHILQ (151 aa)) is C-terminal hotdog fold. The active-site Proton donor; for dehydratase activity is aspartate 1479. Residues 1723 to 1799 (RILSDSMIKL…ELHDLMQSHP (77 aa)) enclose the Carrier domain. Serine 1759 bears the O-(pantetheine 4'-phosphoryl)serine mark. The tract at residues 1944–2177 (YHGSEHKLLR…GFTHVDWSND (234 aa)) is methyltransferase (CMeT) domain.

Pantetheine 4'-phosphate is required as a cofactor.

It functions in the pathway secondary metabolite biosynthesis; terpenoid biosynthesis. Non-reducing polyketide synthase; part of the cluster that mediates the biosynthesis of shearones, diterpenoid pyrones (DPs) which are structurally diverse meroterpenoids consisting of a diterpene linked by a pyrone, and which may exhibit a range of bioactivities. Whitin the pathway, esdpA takes part to the biosynthesis of the molecular scaffold via the production of the alpha-pyrone from one molecule of acetyl-CoA, two molecules of malonyl-CoA and one molecule of S-adenosyl-L-methionine (SAM). The molecular scaffold is commonly biosynthesized by a series of enzymes including the non-reducing polyketide synthase (NR-PKS) esdpA that generates an alpha-pyrone; the prenyltransferase esdpC that attaches a geranylgeranyl pyrophosphate (GGPP) produced by the GGPP synthase (GGPPS) esdpD onto the pyrone unit; the FAD-dependent monooxygenase esdpE that converts an olefin on the diterpene unit into an epoxide; and the terpene cyclase esdpB that catalyzes the cyclization reactions to give the molecular backbone shearone A. In the modification steps, esdpF oxidizes the hydroxy group to a ketone at C-3 and esdpG then attaches hydroxy groups at both C-11 and C-12. After that, esdpI hydroxylates at C-20 and esdpH hydroxylates at C-6'. The ether bridge is generated by nucleophilic attack of the hydroxy group at C-20 to the carbonyl carbon at C-3. EsdpH can also functions prior to esdpI. The different combinations of these modification enzymes lead to the production of diverse shearone derivatives, shearone I being the end product of the pathway. The alpha-ketoglutarate-dependent dioxygenase esdpJ seems not to be involved in this pathway. This is Non-reducing polyketide synthase esdpA from Penicillium shearii (Eupenicillium shearii).